The sequence spans 840 residues: UPF0508 protein SCY_2952 (840 aa).

This sequence belongs to the UPF0508 family.

This is UPF0508 protein SCY_2952 from Saccharomyces cerevisiae (strain YJM789) (Baker's yeast).